Reading from the N-terminus, the 286-residue chain is ATP synthase gamma chain (286 aa).

It belongs to the ATPase gamma chain family. In terms of assembly, F-type ATPases have 2 components, CF(1) - the catalytic core - and CF(0) - the membrane proton channel. CF(1) has five subunits: alpha(3), beta(3), gamma(1), delta(1), epsilon(1). CF(0) has three main subunits: a, b and c.

The protein localises to the cell inner membrane. In terms of biological role, produces ATP from ADP in the presence of a proton gradient across the membrane. The gamma chain is believed to be important in regulating ATPase activity and the flow of protons through the CF(0) complex. This Shewanella loihica (strain ATCC BAA-1088 / PV-4) protein is ATP synthase gamma chain.